The following is a 474-amino-acid chain: Mitogen-activated protein kinase pmk-3 (474 aa).

Residues 1-13 (MASVPSSSSLPVS) show a composition bias toward low complexity. The interval 1–90 (MASVPSSSSL…EEEEDILSKP (90 aa)) is disordered. Positions 30-48 (KRSNNQSQPPESYEPNTWL) are enriched in polar residues. A compositionally biased stretch (basic and acidic residues) spans 52 to 69 (REQEQQKKLAAENIKKQS). A Protein kinase domain is found at 114–419 (YDVEPNSIEY…VEEAIQHPYL (306 aa)). ATP-binding positions include 124–132 (LGGGSFGNV) and Lys150. Asp252 acts as the Proton acceptor in catalysis. Residue Thr285 is modified to Phosphothreonine. The TXY signature appears at 285 to 287 (TQY). Residue Tyr287 is modified to Phosphotyrosine.

Belongs to the protein kinase superfamily. CMGC Ser/Thr protein kinase family. MAP kinase subfamily. In terms of assembly, interacts with mak-2. May interact with vhp-1. May interact with uev-3. Mg(2+) serves as cofactor. Dually phosphorylated on Thr-285 and Tyr-287, which activates the enzyme. Expressed throughout the intestine.

The protein localises to the nucleus. The protein resides in the cytoplasm. Its subcellular location is the cell projection. It localises to the axon. It is found in the dendrite. The protein localises to the cilium. It catalyses the reaction L-seryl-[protein] + ATP = O-phospho-L-seryl-[protein] + ADP + H(+). The catalysed reaction is L-threonyl-[protein] + ATP = O-phospho-L-threonyl-[protein] + ADP + H(+). Activated by phosphorylation on threonine and tyrosine. Responds to activation by environmental stress and pro-inflammatory cytokines by phosphorylating downstream targets. Involved in axon regeneration after injury, probably downstream of dlk-1 and mkk-4 and upstream of mak-2. May phosphorylate mak-2. Plays a role in cilium length regulation, possibly by reducing rab-5 mediated endocytosis. Plays a role in the formation of muscle connections, also called muscle arm extensions, between the body wall and the motor axons in the dorsal and ventral cord. The sequence is that of Mitogen-activated protein kinase pmk-3 (pmk-3) from Caenorhabditis elegans.